The sequence spans 140 residues: Cell division protein SepF (140 aa).

A disordered region spans residues 15 to 47 (DSQYEEPTEASQAAAPTESATNTRSTPKVVPMQ).

Belongs to the SepF family. Homodimer. Interacts with FtsZ.

Its subcellular location is the cytoplasm. Its function is as follows. Cell division protein that is part of the divisome complex and is recruited early to the Z-ring. Probably stimulates Z-ring formation, perhaps through the cross-linking of FtsZ protofilaments. Its function overlaps with FtsA. In Lactiplantibacillus plantarum (strain ATCC BAA-793 / NCIMB 8826 / WCFS1) (Lactobacillus plantarum), this protein is Cell division protein SepF.